A 504-amino-acid polypeptide reads, in one-letter code: Acetyltransferase pyiB (504 aa).

The N-terminal stretch at 1–18 is a signal peptide; that stretch reads MGFLSAGGLWASLFRARI. N84 carries an N-linked (GlcNAc...) asparagine glycan. Catalysis depends on H181, which acts as the Proton acceptor. N-linked (GlcNAc...) asparagine glycans are attached at residues N413 and N467.

Belongs to the plant acyltransferase family.

It participates in mycotoxin biosynthesis. Acetyltransferase; part of the gene cluster that mediates the biosynthesis of the mycotoxin pyrichalasin H, a tyrosine-derived cytochalasan that inhibits the growth of rice seedlings, but also inhibits lymphocyte capping and actin polymerization and alters cell morphology. Pyrichalasin H is indicated as the responsible agent for the genus-specific pathogenicity of M.grisea toward crabgrass. The first step in the pathway is catalyzed by the O-methyltransferase pyiA which methylates free tyrosine to generate the precursor O-methyltyrosine. The hybrid PKS-NRPS pyiS, assisted by the enoyl reductase pyiC, are responsible for fusion of the O-methyltyrosine precursor and the polyketide backbone. The polyketide synthase module (PKS) of pyiS is responsible for the synthesis of the polyketide backbone and the downstream nonribosomal peptide synthetase (NRPS) amidates the carboxyl end of the polyketide with the O-methyltyrosine precursor. As the NRPS A-domain demonstrates substrate tolerance, pyiS can also use phenylalanine, tyrosine and even para-chlorophenylalanine as amino acid precursor, which leads to the production of novel cytochalasans, including halogenated cytochalasans. Because pyiS lacks a designated enoylreductase (ER) domain, the required activity is provided the enoyl reductase pyiC. Reduction by the hydrolyase pyiE leads to 1,5-dihydropyrrolone, which is substrate for dehydration and intra-molecular Diels-Alder cyclization by the Diels-Alderase pyiF to yield the required isoindolone-fused macrocycle. The tailoring cytochrome P450 monooxygenases piyD and piyG catalyze the hydroxylation at C-18 and C-7, respectivily, whereas the short-chain dehydrogenase/reductase pyiH reduces the carbonyl at C-21 in preparation for the transfer of an acetyl group by the acetyltransferase pyiB. These 3 reactions whose order is not clear yet, lead to the production of O-methylpyrichalasin J, a deacetylated pyrichalasin H. Finally, pyiB to converts O-methylpyrichalasin J into the final product pyrichalasin H via acetylation of C-21. This Pyricularia grisea (Crabgrass-specific blast fungus) protein is Acetyltransferase pyiB.